The chain runs to 280 residues: Pantothenate synthetase (280 aa).

30–37 (MGYLHEGH) contacts ATP. Histidine 37 functions as the Proton donor in the catalytic mechanism. (R)-pantoate is bound at residue glutamine 61. Residue glutamine 61 coordinates beta-alanine. An ATP-binding site is contributed by 147–150 (GQKD). Glutamine 153 lines the (R)-pantoate pocket. Residues valine 176 and 184 to 187 (MSSR) contribute to the ATP site.

Belongs to the pantothenate synthetase family. In terms of assembly, homodimer.

The protein localises to the cytoplasm. The catalysed reaction is (R)-pantoate + beta-alanine + ATP = (R)-pantothenate + AMP + diphosphate + H(+). The protein operates within cofactor biosynthesis; (R)-pantothenate biosynthesis; (R)-pantothenate from (R)-pantoate and beta-alanine: step 1/1. Its function is as follows. Catalyzes the condensation of pantoate with beta-alanine in an ATP-dependent reaction via a pantoyl-adenylate intermediate. The polypeptide is Pantothenate synthetase (Thermotoga petrophila (strain ATCC BAA-488 / DSM 13995 / JCM 10881 / RKU-1)).